The sequence spans 97 residues: Mapk-regulated corepressor-interacting protein 1 (97 aa).

Residues 1–29 (MTSSPVSRVVYNGKRNSSPRSPTNSSEIF) are disordered. The span at 15 to 26 (RNSSPRSPTNSS) shows a compositional bias: low complexity. Ser-21 bears the Phosphoserine mark. Thr-30 carries the post-translational modification Phosphothreonine. Position 41 is a phosphotyrosine (Tyr-41). N6-acetyllysine is present on Lys-79. Residues 80–84 (PIDLS) carry the PXDLS motif motif.

The protein belongs to the MCRIP family. Interacts (unphosphorylated form, via the PXDLS motif) with CTBP1, competitively inhibiting CTBP-ZEB1 interaction. Interacts with CTBP2. Interacts with MCRIP2. Interacts with DDX6. Phosphorylation by MAPK3/1 (ERK1/2) regulates MCRIP1 binding to CTBP(s). In terms of tissue distribution, widely expressed (at protein level).

It is found in the nucleus. The protein localises to the cytoplasm. The protein resides in the stress granule. The phosphorylation status of MCRIP1 functions as a molecular switch to regulate epithelial-mesenchymal transition. Unphosphorylated MCRIP1 binds to and inhibits the transcriptional corepressor CTBP(s). When phosphorylated by MAPK/ERK, MCRIP1 releases CTBP(s) resulting in transcriptional silencing of the E-cadherin gene and induction of epithelial-mesenchymal transition. This is Mapk-regulated corepressor-interacting protein 1 (Mcrip1) from Mus musculus (Mouse).